The sequence spans 295 residues: ATP synthase gamma chain (295 aa).

This sequence belongs to the ATPase gamma chain family. F-type ATPases have 2 components, CF(1) - the catalytic core - and CF(0) - the membrane proton channel. CF(1) has five subunits: alpha(3), beta(3), gamma(1), delta(1), epsilon(1). CF(0) has three main subunits: a, b and c.

The protein resides in the cell inner membrane. In terms of biological role, produces ATP from ADP in the presence of a proton gradient across the membrane. The gamma chain is believed to be important in regulating ATPase activity and the flow of protons through the CF(0) complex. The protein is ATP synthase gamma chain of Sulfurovum sp. (strain NBC37-1).